Consider the following 929-residue polypeptide: MGGSCAQRRRAGPRQVLFPLLLPLFYPTLCEPIRYSIPEELAKGSVVGNLAKDLGLSVLDVSARELRVSAEKLHFSVDAQSGDLLVKDRIDREQICKERRRCELQLEAVVENPLNIFHVIVVIEDVNDHAPQFRKDEINLEISESVSLGMGTILESAEDPDISMNSLSKYQLSPNEYFSLVEKDNPDGGKYPELVLQKTLDRETQSAHHLVLTALDGGDPPRSGTAQIRILVIDANDNPPVFSQDVYRVSLREDVPPGTSILRVKATDQDEGINSEITYSFFGVADKAQHVFSLDYTTGNILTQQPLDFEEVERYTINIEAKDRGSLSTRCKVIVEVVDENDNSPEIIITSLSDQIMEDSPPGVVVALFKTRDQDSGENGEVRCSLSRGVPFKIHSSSNNYYKLVTDEALDREQTPEYNVTIAATDRGKPPLSSSKTITLHITDVNDNAPVFGQSAYLVHVPENNQPGASIAQVSASDPDFGLNGRVSYSLIASDLESRTLSSYVSVSAQSGVVFAQRAFDHEQLRTFELTLQARDQGSPALSANVSLRVLVGDRNDNAPRVLYPALGPDGSALFDTVPRAAQPGYLVTKVVAVDADSGHNAWLSYHVVQASEPGLFSLGLRTGEVRMVRALGDKDSVRQRLLVAVRDGGQPPLSATATLHLVFADSLQEVLPDFSDHPTPSDSQAEMQFYLVVALALISVLFLLAVILAIALRLRQSFSPTAGDCFESVLCSKSGPVGPPNYSEGTLPYAYNFCVPGDQMNPEFNFFTSVDHCPATQDNLNKDSMLLASILTPSVEADKKILKQQAPPNTDWRFSQAQRPGTSGSQNGDDTGTWPNNQFDTEMLQAMILASASEAADGSSTLGGGAGTMGLSARYGPQFTLQHVPDYRQNVYIPGSNATLTNAAGKRDGKAPAGGNGNKKKSGKKEKK.

The signal sequence occupies residues 1-30; sequence MGGSCAQRRRAGPRQVLFPLLLPLFYPTLC. 6 consecutive Cadherin domains span residues 31-133, 134-242, 243-347, 348-452, 453-562, and 570-675; these read EPIR…APQF, RKDE…PPVF, SQDV…SPEI, IITS…APVF, GQSA…APRV, and DGSA…LPDF. Residues 31–691 lie on the Extracellular side of the membrane; that stretch reads EPIRYSIPEE…SDSQAEMQFY (661 aa). Asn-419 and Asn-545 each carry an N-linked (GlcNAc...) asparagine glycan. A helical membrane pass occupies residues 692 to 712; the sequence is LVVALALISVLFLLAVILAIA. The Cytoplasmic portion of the chain corresponds to 713–929; the sequence is LRLRQSFSPT…KKKSGKKEKK (217 aa). Disordered stretches follow at residues 806–838 and 899–929; these read QAPP…WPNN and ATLT…KEKK. Residues 807–838 are compositionally biased toward polar residues; sequence APPNTDWRFSQAQRPGTSGSQNGDDTGTWPNN. The segment covering 919 to 929 has biased composition (basic residues); sequence NKKKSGKKEKK.

The protein localises to the cell membrane. Its function is as follows. Potential calcium-dependent cell-adhesion protein. May be involved in the establishment and maintenance of specific neuronal connections in the brain. This Homo sapiens (Human) protein is Protocadherin gamma-B7 (PCDHGB7).